Consider the following 662-residue polypeptide: Protein Aster-C (662 aa).

The tract at residues 1-33 is disordered; that stretch reads MEGALTARQIVNEGDSSLATELQEEPEESPGPV. In terms of domain architecture, GRAM spans 70–176; that stretch reads EYRQQFTHLP…LIIFRLWQNV (107 aa). Residues 212–294 form a disordered region; that stretch reads VEENVQPRSP…EKRISRAPSK (83 aa). A compositionally biased stretch (polar residues) spans 240–250; that stretch reads VSFTQESVSRA. A compositionally biased stretch (basic and acidic residues) spans 265 to 276; the sequence is LGKEDSQSERNV. The VASt domain maps to 326-497; sequence QGRLYINRVF…DLLMEESVLS (172 aa). Residues 506-530 are disordered; it reads HSSLRRRRRTLNRTAEPVPKLSSQR. Positions 507 to 516 are enriched in basic residues; it reads SSLRRRRRTL. A helical membrane pass occupies residues 557–577; the sequence is LIVVMSIFLLLLVLLNVTLFL.

Highly expressed in the liver. Also found in the testis.

It localises to the endoplasmic reticulum membrane. The protein localises to the cell membrane. Cholesterol transporter that mediates non-vesicular transport of cholesterol from the plasma membrane (PM) to the endoplasmic reticulum (ER). Contains unique domains for binding cholesterol and the PM, thereby serving as a molecular bridge for the transfer of cholesterol from the PM to the ER. Plays a crucial role in cholesterol homeostasis and has the unique ability to localize to the PM based on the level of membrane cholesterol. In lipid-poor conditions localizes to the ER membrane and in response to excess cholesterol in the PM is recruited to the endoplasmic reticulum-plasma membrane contact sites (EPCS) which is mediated by the GRAM domain. At the EPCS, the sterol-binding VASt/ASTER domain binds to the cholesterol in the PM and facilitates its transfer from the PM to ER. The sequence is that of Protein Aster-C (Gramd1c) from Mus musculus (Mouse).